The sequence spans 189 residues: GTPase NRas (189 aa).

Residue 10–17 (GAGGVGKS) coordinates GTP. An Effector region motif is present at residues 32–40 (YDPTIEDSY). GTP-binding positions include 57–61 (DTAGQ) and 116–119 (NKCD). Residues 166 to 185 (YRMKKLDSSEDNNQGCIRIP) are hypervariable region. Residue cysteine 181 is the site of S-palmitoyl cysteine attachment. Residue cysteine 186 is the site of S-farnesyl cysteine attachment. The propeptide at 187–189 (KLM) is removed in mature form.

It belongs to the small GTPase superfamily. Ras family. In terms of processing, palmitoylated by the ZDHHC9-GOLGA7 complex. Depalmitoylated by abhd17a, abhd17b and abhd17c. A continuous cycle of de- and re-palmitoylation regulates rapid exchange between plasma membrane and Golgi.

Its subcellular location is the cell membrane. It localises to the golgi apparatus membrane. The enzyme catalyses GTP + H2O = GDP + phosphate + H(+). With respect to regulation, alternates between an inactive form bound to GDP and an active form bound to GTP. Activated by a guanine nucleotide-exchange factor (GEF) and inactivated by a GTPase-activating protein (GAP). Ras proteins bind GDP/GTP and possess intrinsic GTPase activity. The sequence is that of GTPase NRas (nras) from Xenopus laevis (African clawed frog).